The sequence spans 239 residues: SkfA peptide export ATP-binding protein SkfE (239 aa).

The ABC transporter domain maps to 4–232 (MQVQNLSKCY…AEWRKEVIRL (229 aa)). Residue 36–43 (GPNGAGKT) coordinates ATP.

Belongs to the ABC transporter superfamily. SkfA peptide export (TC 3.A.1.128.1) family.

The protein localises to the cell membrane. The enzyme catalyses sulfate(out) + ATP + H2O = sulfate(in) + ADP + phosphate + H(+). The catalysed reaction is thiosulfate(out) + ATP + H2O = thiosulfate(in) + ADP + phosphate + H(+). Its function is as follows. Probably part of the ABC transporter SkfEF involved in the export of the bacteriocin SKF. Probably responsible for energy coupling to the transport system. The polypeptide is SkfA peptide export ATP-binding protein SkfE (Bacillus subtilis (strain 168)).